The following is a 152-amino-acid chain: Ribosome maturation factor RimP (152 aa).

Belongs to the RimP family.

It localises to the cytoplasm. Functionally, required for maturation of 30S ribosomal subunits. This is Ribosome maturation factor RimP from Idiomarina loihiensis (strain ATCC BAA-735 / DSM 15497 / L2-TR).